We begin with the raw amino-acid sequence, 482 residues long: Anaerobic nitric oxide reductase flavorubredoxin (482 aa).

A zinc metallo-hydrolase region spans residues 30 to 210 (LRGSSYNSYL…PFSRLVTPKI (181 aa)). Fe cation is bound by residues His79, Glu81, Asp83, His147, Asp166, and His227. Residues 254–393 (ITLFYDTMSN…ICRQHGREIA (140 aa)) form the Flavodoxin-like domain. Residues 260 to 264 (TMSNN) and 342 to 369 (AFGS…EMSM) each bind FMN. The Rubredoxin-like domain maps to 426–477 (GPCMQCSVCQWVYDPALGEPLQDVAPGTPWSDVPDNFLCPECSLGKDVFDVL). Fe cation-binding residues include Cys431, Cys434, Cys464, and Cys467.

The protein in the N-terminal section; belongs to the zinc metallo-hydrolase group 3 family. In terms of assembly, homotetramer. It depends on Fe cation as a cofactor. FMN is required as a cofactor.

It is found in the cytoplasm. It participates in nitrogen metabolism; nitric oxide reduction. Functionally, anaerobic nitric oxide reductase; uses NADH to detoxify nitric oxide (NO), protecting several 4Fe-4S NO-sensitive enzymes. Has at least 2 reductase partners, only one of which (NorW, flavorubredoxin reductase) has been identified. NO probably binds to the di-iron center; electrons enter from the NorW at rubredoxin and are transferred sequentially to the FMN center and the di-iron center. Also able to function as an aerobic oxygen reductase. This chain is Anaerobic nitric oxide reductase flavorubredoxin, found in Enterobacter sp. (strain 638).